The following is a 162-amino-acid chain: 2-C-methyl-D-erythritol 2,4-cyclodiphosphate synthase (162 aa).

Residues D12 and H14 each coordinate a divalent metal cation. 4-CDP-2-C-methyl-D-erythritol 2-phosphate is bound by residues 12–14 and 38–39; these read DVH and HS. An a divalent metal cation-binding site is contributed by H46. 4-CDP-2-C-methyl-D-erythritol 2-phosphate contacts are provided by residues 60 to 62, 65 to 69, and R146; these read DIG and FPDTD.

The protein belongs to the IspF family. Homotrimer. It depends on a divalent metal cation as a cofactor.

The catalysed reaction is 4-CDP-2-C-methyl-D-erythritol 2-phosphate = 2-C-methyl-D-erythritol 2,4-cyclic diphosphate + CMP. It functions in the pathway isoprenoid biosynthesis; isopentenyl diphosphate biosynthesis via DXP pathway; isopentenyl diphosphate from 1-deoxy-D-xylulose 5-phosphate: step 4/6. Functionally, involved in the biosynthesis of isopentenyl diphosphate (IPP) and dimethylallyl diphosphate (DMAPP), two major building blocks of isoprenoid compounds. Catalyzes the conversion of 4-diphosphocytidyl-2-C-methyl-D-erythritol 2-phosphate (CDP-ME2P) to 2-C-methyl-D-erythritol 2,4-cyclodiphosphate (ME-CPP) with a corresponding release of cytidine 5-monophosphate (CMP). In Bordetella petrii (strain ATCC BAA-461 / DSM 12804 / CCUG 43448), this protein is 2-C-methyl-D-erythritol 2,4-cyclodiphosphate synthase.